The sequence spans 132 residues: Small ribosomal subunit protein uS9 (132 aa).

This sequence belongs to the universal ribosomal protein uS9 family.

This Methanothrix thermoacetophila (strain DSM 6194 / JCM 14653 / NBRC 101360 / PT) (Methanosaeta thermophila) protein is Small ribosomal subunit protein uS9.